The sequence spans 391 residues: E3 ubiquitin-protein ligase RMND5A (391 aa).

The region spanning 114–146 is the LisH domain; it reads SQQILSEVMVEHFFRQGMLDVAEELCQEAGLSI. The CTLH domain occupies 153-210; that stretch reads PFVELNRILEALKVRVLRPALEWAVSNREMLMAQNSSLEFKLHRLYFISLLMGGTVNQ. The RING-Gid-type zinc-finger motif lies at 336–377; that stretch reads CPILRQQTTDNNPPMKLVCGHIISRDALNKMFNGSKLKCPYC.

As to quaternary structure, identified in the CTLH complex that contains at least RANBP9, MKLN1, MAEA, RMND5A, GID8 and ARMC8.

Its subcellular location is the nucleus. The protein resides in the nucleoplasm. It localises to the cytoplasm. The catalysed reaction is S-ubiquitinyl-[E2 ubiquitin-conjugating enzyme]-L-cysteine + [acceptor protein]-L-lysine = [E2 ubiquitin-conjugating enzyme]-L-cysteine + N(6)-ubiquitinyl-[acceptor protein]-L-lysine.. In terms of biological role, E3 ubiquitin-protein ligase component of the CTLH complex. In Xenopus tropicalis (Western clawed frog), this protein is E3 ubiquitin-protein ligase RMND5A (rmnd5a).